A 351-amino-acid polypeptide reads, in one-letter code: Cyclic AMP-dependent transcription factor ATF-4 (351 aa).

Lys-53 is covalently cross-linked (Glycyl lysine isopeptide (Lys-Gly) (interchain with G-Cter in SUMO2)). The disordered stretch occupies residues 210 to 268 (EEDTPSDNDSGICMSPESYLGSPQHSPSTRGSPNRSLPSPGVLCGSARPKPYDPPGEKM). Thr-213 bears the Phosphothreonine mark. Ser-215 is subject to Phosphoserine; by CK2. Positions 215–224 (SDNDSGICMS) match the BetaTrCP degron motif motif. Residues Ser-219, Ser-224, Ser-231, and Ser-235 each carry the phosphoserine modification. The segment covering 230 to 246 (GSPQHSPSTRGSPNRSL) has biased composition (polar residues). Pro-236 is subject to 4-hydroxyproline. Ser-245 is subject to Phosphoserine; by RPS6KA3. Ser-248 is modified (phosphoserine). Glycyl lysine isopeptide (Lys-Gly) (interchain with G-Cter in SUMO2) cross-links involve residues Lys-259, Lys-267, and Lys-272. In terms of domain architecture, bZIP spans 278 to 341 (LDKKLKKMEQ…QYLKDLIEEV (64 aa)). The interval 280 to 300 (KKLKKMEQNKTAATRYRQKKR) is basic motif. Residues 280-340 (KKLKKMEQNK…IQYLKDLIEE (61 aa)) adopt a coiled-coil conformation. Positions 305–341 (ALTGECKELEKKNEALKERADSLAKEIQYLKDLIEEV) are interaction with GABBR1. Residues 306–334 (LTGECKELEKKNEALKERADSLAKEIQYL) form a leucine-zipper region. Lys-311 carries the N6-acetyllysine modification.

Belongs to the bZIP family. As to quaternary structure, binds DNA as a homodimer and as a heterodimer. Heterodimer; heterodimerizes with CEBPB. Heterodimer; heterodimerizes with DDIT3/CHOP. Interacts with CEP290 (via an N-terminal region). Interacts with NEK6, DAPK2 (isoform 2) and ZIPK/DAPK3. Interacts (via its leucine zipper domain) with GABBR1 and GABBR2 (via their C-termini). Forms a heterodimer with TXLNG in osteoblasts. Interacts (via its DNA binding domain) with FOXO1 (C-terminal half); the interaction occurs in osteoblasts and regulates glucose homeostasis through suppression of beta-cell proliferation and a decrease in insulin production. Interacts with SATB2; the interaction results in enhanced DNA binding and transactivation by these transcription factors. Interacts with ABRAXAS2. Interacts with TRIB3, inhibiting the transactivation activity of ATF4. Interacts with DISC1; which inhibits ATF4 transcription factor activity by disrupting ATF4 dimerization and DNA-binding. Interacts with EP300/p300; EP300/p300 stabilizes ATF4 and increases its transcriptional activity independently of its catalytic activity by preventing its ubiquitination. In terms of processing, ubiquitinated by SCF(BTRC) in response to mTORC1 signal, followed by proteasomal degradation and leading to down-regulate expression of SIRT4. Interaction with EP300/p300 inhibits ubiquitination by SCF(BTRC). Phosphorylation at Ser-245 by RPS6KA3/RSK2 in osteoblasts enhances transactivation activity and promotes osteoblast differentiation. Phosphorylated on the betaTrCP degron motif at Ser-219, followed by phosphorylation at Thr-213, Ser-224, Ser-231, Ser-235 and Ser-248, promoting interaction with BTRC and ubiquitination. Phosphorylation is promoted by mTORC1. Phosphorylation at Ser-215 by CK2 decreases its stability. Phosphorylated by NEK6. Post-translationally, hydroxylated by PHD3, leading to decreased protein stability.

Its subcellular location is the nucleus. It is found in the nucleus speckle. The protein localises to the cytoplasm. The protein resides in the cell membrane. It localises to the cytoskeleton. Its subcellular location is the microtubule organizing center. It is found in the centrosome. Functionally, transcription factor that binds the cAMP response element (CRE) (consensus: 5'-GTGACGT[AC][AG]-3') and displays two biological functions, as regulator of metabolic and redox processes under normal cellular conditions, and as master transcription factor during integrated stress response (ISR). Binds to asymmetric CRE's as a heterodimer and to palindromic CRE's as a homodimer. Core effector of the ISR, which is required for adaptation to various stress such as endoplasmic reticulum (ER) stress, amino acid starvation, mitochondrial stress or oxidative stress. During ISR, ATF4 translation is induced via an alternative ribosome translation re-initiation mechanism in response to EIF2S1/eIF-2-alpha phosphorylation, and stress-induced ATF4 acts as a master transcription factor of stress-responsive genes in order to promote cell recovery. Promotes the transcription of genes linked to amino acid sufficiency and resistance to oxidative stress to protect cells against metabolic consequences of ER oxidation. Activates the transcription of NLRP1, possibly in concert with other factors in response to ER stress. Activates the transcription of asparagine synthetase (ASNS) in response to amino acid deprivation or ER stress. However, when associated with DDIT3/CHOP, the transcriptional activation of the ASNS gene is inhibited in response to amino acid deprivation. Together with DDIT3/CHOP, mediates programmed cell death by promoting the expression of genes involved in cellular amino acid metabolic processes, mRNA translation and the terminal unfolded protein response (terminal UPR), a cellular response that elicits programmed cell death when ER stress is prolonged and unresolved. Activates the expression of COX7A2L/SCAF1 downstream of the EIF2AK3/PERK-mediated unfolded protein response, thereby promoting formation of respiratory chain supercomplexes and increasing mitochondrial oxidative phosphorylation. Together with DDIT3/CHOP, activates the transcription of the IRS-regulator TRIB3 and promotes ER stress-induced neuronal cell death by regulating the expression of BBC3/PUMA in response to ER stress. May cooperate with the UPR transcriptional regulator QRICH1 to regulate ER protein homeostasis which is critical for cell viability in response to ER stress. In the absence of stress, ATF4 translation is at low levels and it is required for normal metabolic processes such as embryonic lens formation, fetal liver hematopoiesis, bone development and synaptic plasticity. Acts as a regulator of osteoblast differentiation in response to phosphorylation by RPS6KA3/RSK2: phosphorylation in osteoblasts enhances transactivation activity and promotes expression of osteoblast-specific genes and post-transcriptionally regulates the synthesis of Type I collagen, the main constituent of the bone matrix. Cooperates with FOXO1 in osteoblasts to regulate glucose homeostasis through suppression of beta-cell production and decrease in insulin production. Activates transcription of SIRT4. Regulates the circadian expression of the core clock component PER2 and the serotonin transporter SLC6A4. Binds in a circadian time-dependent manner to the cAMP response elements (CRE) in the SLC6A4 and PER2 promoters and periodically activates the transcription of these genes. Mainly acts as a transcriptional activator in cellular stress adaptation, but it can also act as a transcriptional repressor: acts as a regulator of synaptic plasticity by repressing transcription, thereby inhibiting induction and maintenance of long-term memory. Regulates synaptic functions via interaction with DISC1 in neurons, which inhibits ATF4 transcription factor activity by disrupting ATF4 dimerization and DNA-binding. In terms of biological role, (Microbial infection) Binds to a Tax-responsive enhancer element in the long terminal repeat of HTLV-I. In Homo sapiens (Human), this protein is Cyclic AMP-dependent transcription factor ATF-4.